The primary structure comprises 335 residues: Phosphate acyltransferase (335 aa).

It belongs to the PlsX family. In terms of assembly, homodimer. Probably interacts with PlsY.

Its subcellular location is the cytoplasm. It catalyses the reaction a fatty acyl-[ACP] + phosphate = an acyl phosphate + holo-[ACP]. Its pathway is lipid metabolism; phospholipid metabolism. Catalyzes the reversible formation of acyl-phosphate (acyl-PO(4)) from acyl-[acyl-carrier-protein] (acyl-ACP). This enzyme utilizes acyl-ACP as fatty acyl donor, but not acyl-CoA. In Clostridium botulinum (strain ATCC 19397 / Type A), this protein is Phosphate acyltransferase.